A 254-amino-acid polypeptide reads, in one-letter code: uncharacterized protein (254 aa).

This is an uncharacterized protein from Escherichia coli (strain K12).